Consider the following 77-residue polypeptide: U10-lycotoxin-Ls1a (77 aa).

The N-terminal stretch at 1–20 (MKLIIFTGLVLFAIVSLIEA) is a signal peptide. The propeptide occupies 21-26 (EEESGR).

The protein belongs to the neurotoxin 19 (CSTX) family. 09 (U10-Lctx) subfamily. Post-translationally, contains 4 disulfide bonds. As to expression, expressed by the venom gland.

It is found in the secreted. The sequence is that of U10-lycotoxin-Ls1a from Lycosa singoriensis (Wolf spider).